The primary structure comprises 283 residues: Cyclin-C (283 aa).

The 99-residue stretch at Asn46–Glu144 folds into the Cyclin N-terminal domain. Residues Thr252–Ser283 form a disordered region. The span at Pro272–Ser283 shows a compositional bias: polar residues. Ser275 carries the post-translational modification Phosphoserine.

This sequence belongs to the cyclin family. Cyclin C subfamily. As to quaternary structure, component of the Mediator complex, which is composed of MED1, MED4, MED6, MED7, MED8, MED9, MED10, MED11, MED12, MED13, MED13L, MED14, MED15, MED16, MED17, MED18, MED19, MED20, MED21, MED22, MED23, MED24, MED25, MED26, MED27, MED29, MED30, MED31, CCNC, CDK8 and CDC2L6/CDK11. The MED12, MED13, CCNC and CDK8 subunits form a distinct module termed the CDK8 module. Mediator containing the CDK8 module is less active than Mediator lacking this module in supporting transcriptional activation. Individual preparations of the Mediator complex lacking one or more distinct subunits have been variously termed ARC, CRSP, DRIP, PC2, SMCC and TRAP. The cylin/CDK pair formed by CCNC/CDK8 also associates with the large subunit of RNA polymerase II.

It localises to the nucleus. Its function is as follows. Component of the Mediator complex, a coactivator involved in regulated gene transcription of nearly all RNA polymerase II-dependent genes. Mediator functions as a bridge to convey information from gene-specific regulatory proteins to the basal RNA polymerase II transcription machinery. Mediator is recruited to promoters by direct interactions with regulatory proteins and serves as a scaffold for the assembly of a functional preinitiation complex with RNA polymerase II and the general transcription factors. Binds to and activates cyclin-dependent kinase CDK8 that phosphorylates the CTD (C-terminal domain) of the large subunit of RNA polymerase II (RNAp II), which may inhibit the formation of a transcription initiation complex. The polypeptide is Cyclin-C (CCNC) (Bos taurus (Bovine)).